Reading from the N-terminus, the 118-residue chain is Large ribosomal subunit protein uL18 (118 aa).

The tract at residues 1–22 is disordered; it reads MISKPDKNKLRQKRHRRVRGKL. Basic residues predominate over residues 10 to 20; the sequence is LRQKRHRRVRG.

This sequence belongs to the universal ribosomal protein uL18 family. Part of the 50S ribosomal subunit; part of the 5S rRNA/L5/L18/L25 subcomplex. Contacts the 5S and 23S rRNAs.

Functionally, this is one of the proteins that bind and probably mediate the attachment of the 5S RNA into the large ribosomal subunit, where it forms part of the central protuberance. The sequence is that of Large ribosomal subunit protein uL18 from Streptococcus thermophilus (strain ATCC BAA-491 / LMD-9).